The following is an 832-amino-acid chain: AP-1 complex subunit gamma-1 (832 aa).

A GAE domain is found at 733 to 832 (LNVYASLLSA…QFDHKFDETL (100 aa)).

In terms of assembly, adapter protein complex 1 (AP-1) is a heterotetramer composed of two large adaptins (gamma-type subunit APL4 and beta-type subunit APL2), a medium adaptin (mu-type subunit APM1) and a small adaptin (sigma-type subunit APS1). AP-1 interacts with clathrin. Also a component of the AP-1R complex composed of at least APM2, APL4 and APS1.

The protein resides in the cytoplasm. It localises to the golgi apparatus membrane. Its subcellular location is the cytoplasmic vesicle. It is found in the clathrin-coated vesicle membrane. Its function is as follows. Adaptins are components of the adapter complexes which link clathrin to receptors in coated vesicles. Clathrin-associated protein complexes are believed to interact with the cytoplasmic tails of membrane proteins, leading to their selection and concentration. The AP-1 complex interacts directly with clathrin. Component of the AP-1-related (AP-1R) complex, an adapter protein complex that mediates sorting of cargo SNARE SNC1. In contrast to the APM1-containing AP-1 complex, AP-1R is incapable of sorting CHS3. The polypeptide is AP-1 complex subunit gamma-1 (APL4) (Saccharomyces cerevisiae (strain ATCC 204508 / S288c) (Baker's yeast)).